Consider the following 170-residue polypeptide: Cyclic pyranopterin monophosphate synthase (170 aa).

Substrate-binding positions include 75–77 and 115–116; these read MCH and ME. D130 is a catalytic residue.

This sequence belongs to the MoaC family. In terms of assembly, homohexamer; trimer of dimers.

The enzyme catalyses (8S)-3',8-cyclo-7,8-dihydroguanosine 5'-triphosphate = cyclic pyranopterin phosphate + diphosphate. It participates in cofactor biosynthesis; molybdopterin biosynthesis. In terms of biological role, catalyzes the conversion of (8S)-3',8-cyclo-7,8-dihydroguanosine 5'-triphosphate to cyclic pyranopterin monophosphate (cPMP). In Bacillus subtilis (strain 168), this protein is Cyclic pyranopterin monophosphate synthase.